We begin with the raw amino-acid sequence, 1029 residues long: Cilia- and flagella-associated protein 91 (1029 aa).

Disordered regions lie at residues 72–97 and 117–170; these read NYRP…GPNR and PPSQ…PWEP. Residues 272–299 are a coiled coil; that stretch reads LELLDNALQVREEELDDENRLRVEARKE. The segment covering 837–854 has biased composition (low complexity); the sequence is ENQDQQEPQPQPQPSSSS. Disordered stretches follow at residues 837 to 861 and 876 to 1029; these read ENQD…DLAD and GEPS…EAAE. Residues 890–910 are compositionally biased toward acidic residues; it reads QQLEADAEAEAEAEAEAEAGA. Positions 911–921 are enriched in low complexity; the sequence is EAEASAQAGAE. Acidic residues predominate over residues 922–932; the sequence is AEAEAGVEAEA. Residues 933–944 show a composition bias toward low complexity; it reads EASAGAEASVGA. Acidic residues predominate over residues 964 to 982; that stretch reads PEAEAEAEAGAEAEAENGA. Residues 984 to 999 show a composition bias toward basic and acidic residues; that stretch reads AEARLGGEEEGFREGE. Residues 1000–1015 are compositionally biased toward gly residues; it reads GQGGAAAGEAGPGGEL. Residues 1016 to 1029 show a composition bias toward acidic residues; that stretch reads AEGEGEAGEGEAAE.

This sequence belongs to the CFAP91 family. Identified in a spoke-associated complex containing CFAP61, CFAP91 and CFAP251; the complex is associated with the radial spokes of the axoneme. The complex associates with Calmodulin; the association is calcium sensitive. Interacts with RSP3.

It is found in the cytoplasm. It localises to the cytoskeleton. The protein localises to the flagellum axoneme. As component of a spoke-associated complex, regulates flagellar dynein activity by mediating regulatory signals between the radial spokes and dynein arms. The protein is Cilia- and flagella-associated protein 91 of Chlamydomonas reinhardtii (Chlamydomonas smithii).